A 170-amino-acid polypeptide reads, in one-letter code: uncharacterized protein (170 aa).

A run of 3 helical transmembrane segments spans residues Pro-6–Ile-26, Leu-31–Ile-51, and Ile-91–Phe-111.

This sequence to M.jannaschii MJ1249.1, MJ0210.1 and MJ0785.1.

Its subcellular location is the cell membrane. This is an uncharacterized protein from Methanocaldococcus jannaschii (strain ATCC 43067 / DSM 2661 / JAL-1 / JCM 10045 / NBRC 100440) (Methanococcus jannaschii).